The chain runs to 440 residues: Protein TENP (440 aa).

In terms of tissue distribution, expressed in developing retina and brain, but not in heart, liver or kidney. In brain, located in a narrow strip in the boundary between the ventricular zone (consisting of proliferating cells) and the intermediate zone (consisting of postmitotic, differentiating cells). Expressed in all major regions of the developing brain, including the myelencephalon, the mesencephalon, the telencephalon and the diencephalon. In the developing retina, expression is scattered across the retinal neural epithelium. Expressed in egg white (at protein level). Expressed in the magnum of the oviduct (at protein level).

Its function is as follows. May play a role in the developmental transition from cell proliferation to cell differentiation during neurogenesis. The chain is Protein TENP (TENP) from Gallus gallus (Chicken).